A 702-amino-acid polypeptide reads, in one-letter code: Polyribonucleotide nucleotidyltransferase (702 aa).

2 residues coordinate Mg(2+): Asp-485 and Asp-491. In terms of domain architecture, KH spans 552–611 (PKTSTLQIDPEKIRDVIGAGGKVINKIIADTGVKIDIKEDGLVYVSSAESEGVKEAVKII). In terms of domain architecture, S1 motif spans 621-689 (GEIYLGKVTK…SQGRINLSRK (69 aa)).

This sequence belongs to the polyribonucleotide nucleotidyltransferase family. Mg(2+) serves as cofactor.

It localises to the cytoplasm. The catalysed reaction is RNA(n+1) + phosphate = RNA(n) + a ribonucleoside 5'-diphosphate. Involved in mRNA degradation. Catalyzes the phosphorolysis of single-stranded polyribonucleotides processively in the 3'- to 5'-direction. This is Polyribonucleotide nucleotidyltransferase from Clostridium perfringens (strain ATCC 13124 / DSM 756 / JCM 1290 / NCIMB 6125 / NCTC 8237 / Type A).